A 296-amino-acid chain; its full sequence is MTELASPTSFSMPDIGKSPVVLTARRLMRHRSFRIGLVLLLIVVLAAVLAPWITNGKPNATSVRMRFQPPGLEHLFGTDNFGRDLWTRVLYGAQVSLWIGLTVAVLSAILGAIIGIAAAWYRRFDTLLMRVMDALMAFPAILLAIGISAALGPHLSSVIIALTSAYIPRCARIVRASALVLRETDYVDAARLAGASDLRIITRHILPNCLAPLLVTLTFVFAYAILAEATLSFLGIGTPPPHASWGSIVAQGRDYSVDAWWIMLFPGIAITISALAINLIGDGLRDVLDPRLKMEG.

The next 6 membrane-spanning stretches (helical) occupy residues 35–55, 97–117, 131–151, 205–225, 229–249, and 260–280; these read IGLV…WITN, LWIG…IGIA, VMDA…SAAL, ILPN…AYAI, ATLS…GSIV, and WWIM…INLI. The 185-residue stretch at 97–281 folds into the ABC transmembrane type-1 domain; the sequence is LWIGLTVAVL…ISALAINLIG (185 aa).

Belongs to the binding-protein-dependent transport system permease family. In terms of assembly, the complex is composed of two ATP-binding proteins (BruAb2_1033 and BruAb2_1034), two transmembrane proteins (BruAb2_1031 and BruAb2_1032) and a solute-binding protein (BruAb2_1030).

The protein localises to the cell inner membrane. Functionally, probably part of an ABC transporter complex that could be involved in peptide import. Probably responsible for the translocation of the substrate across the membrane. The sequence is that of Putative peptide transport system permease protein BruAb2_1032 from Brucella abortus biovar 1 (strain 9-941).